The following is a 531-amino-acid chain: Sop-2-related protein 3 (531 aa).

Expressed ubiquitously.

It localises to the cytoplasm. Its subcellular location is the nucleus. Its function is as follows. Probably acts synergistically with sop-2 to maintain the transcriptionally repressive state of homeotic genes in order to regulate various neurogenic identities. Specification of some neuronal identities also involves expression of non-Hox genes. Specifies dopaminergic and serotonergic neuronal cell fate, and regulates neurotransmitter choice and axon pathfinding. The protein is Sop-2-related protein 3 (sor-3) of Caenorhabditis elegans.